A 509-amino-acid polypeptide reads, in one-letter code: ATP synthase subunit alpha, mitochondrial (509 aa).

171 to 178 (GDRQTGKT) contacts ATP.

Belongs to the ATPase alpha/beta chains family. As to quaternary structure, F-type ATPases have 2 components, CF(1) - the catalytic core - and CF(0) - the membrane proton channel. CF(1) has five subunits: alpha(3), beta(3), gamma(1), delta(1), epsilon(1). CF(0) has three main subunits: a, b and c.

Its subcellular location is the mitochondrion. It localises to the mitochondrion inner membrane. Its function is as follows. Mitochondrial membrane ATP synthase (F(1)F(0) ATP synthase or Complex V) produces ATP from ADP in the presence of a proton gradient across the membrane which is generated by electron transport complexes of the respiratory chain. F-type ATPases consist of two structural domains, F(1) - containing the extramembraneous catalytic core, and F(0) - containing the membrane proton channel, linked together by a central stalk and a peripheral stalk. During catalysis, ATP synthesis in the catalytic domain of F(1) is coupled via a rotary mechanism of the central stalk subunits to proton translocation. Subunits alpha and beta form the catalytic core in F(1). Rotation of the central stalk against the surrounding alpha(3)beta(3) subunits leads to hydrolysis of ATP in three separate catalytic sites on the beta subunits. Subunit alpha does not bear the catalytic high-affinity ATP-binding sites. The sequence is that of ATP synthase subunit alpha, mitochondrial (ATPA) from Triticum aestivum (Wheat).